The sequence spans 87 residues: Small polypeptide ROTUNDIFOLIA LIKE 2 (87 aa).

The helical transmembrane segment at 19–35 (LIPHTSHYILQLVYLHL) threads the bilayer. Residues 56–87 (GQMGRLNRAFREKRARFYIFRRCVIMLLRWSD) form a required for DVL/RTFL small polypeptide activity region.

The protein belongs to the DVL/RTFL small polypeptides family.

It is found in the cell membrane. Small polypeptide acting as a regulatory molecule which coordinates cellular responses required for differentiation, growth and development, probably by restricting polar cell proliferation in lateral organs. In Oryza sativa subsp. japonica (Rice), this protein is Small polypeptide ROTUNDIFOLIA LIKE 2.